A 157-amino-acid polypeptide reads, in one-letter code: Baculoviral IAP repeat-containing protein 5.2-B (157 aa).

Residues 31-101 (RLRTFSNWPF…KHSPSCLFIA (71 aa)) form a BIR repeat. Thr47 is subject to Phosphothreonine; by CDK1. Positions 70, 73, 90, and 97 each coordinate Zn(2+).

Belongs to the IAP family. In terms of assembly, component of the CPC at least composed of survivin/birc5, incenp, cdca8/borealin and/or cdca9/dasra-A, and aurkb/aurora-B. Interacts directly with incenp (via N-terminus). Interacts with rxra; the interaction is stronger in the absence of 9-cis retinoic acids. Ubiquitination is required for centrosome-targeting. Exhibits strong and homogeneous expression in developing oocytes. In embryos, expressed in the animal hemisphere from one-cell to yolk plug stages, and highly expressed in the future brain and dorsal region of the neural tube at the neurula stage and early tail-bud stage. At tadpole stages, expression is restricted at a low level to the head region.

The protein localises to the cytoplasm. It localises to the nucleus. The protein resides in the chromosome. It is found in the centromere. Its subcellular location is the cytoskeleton. The protein localises to the spindle. Functionally, does not appear to exhibit anti-apoptotic activity. Plays a role in increasing blood vessel size during development. Component of the chromosomal passenger complex (CPC), a complex that acts as a key regulator of mitosis. The CPC complex has essential functions at the centromere in ensuring correct chromosome alignment and segregation and is required for chromatin-induced microtubule stabilization and spindle assembly. The protein is Baculoviral IAP repeat-containing protein 5.2-B (birc5.2-b) of Xenopus laevis (African clawed frog).